A 183-amino-acid polypeptide reads, in one-letter code: Adenine phosphoribosyltransferase (183 aa).

This sequence belongs to the purine/pyrimidine phosphoribosyltransferase family. As to quaternary structure, homodimer.

The protein localises to the cytoplasm. The catalysed reaction is AMP + diphosphate = 5-phospho-alpha-D-ribose 1-diphosphate + adenine. It functions in the pathway purine metabolism; AMP biosynthesis via salvage pathway; AMP from adenine: step 1/1. Its function is as follows. Catalyzes a salvage reaction resulting in the formation of AMP, that is energically less costly than de novo synthesis. The chain is Adenine phosphoribosyltransferase from Escherichia coli (strain K12 / MC4100 / BW2952).